The chain runs to 396 residues: DNA polymerase interacting tetratricopeptide repeat-containing, protein of 47 kDa (396 aa).

TPR repeat units lie at residues Ala91–Asn124, Ala129–Tyr162, and Thr163–Asn196.

Belongs to the TTC4 family. In terms of assembly, forms a complex with Hsp83 and Hsp70aa. Interacts with DNApol-alpha180; the interaction inhibits the activity of the DNA polymerase and occurs only in proliferating cells but not in quiescent cells. More abundant in young embryos, pupae and females and a lower level expression seen in late embryos, larvae and males.

Its subcellular location is the nucleus. The protein resides in the nucleoplasm. It is found in the cytoplasm. Its function is as follows. May act as a co-chaperone for HSP83. In Drosophila melanogaster (Fruit fly), this protein is DNA polymerase interacting tetratricopeptide repeat-containing, protein of 47 kDa (Dpit47).